We begin with the raw amino-acid sequence, 102 residues long: Iron-sulfur cluster assembly protein CyaY (102 aa).

It belongs to the frataxin family.

In terms of biological role, involved in iron-sulfur (Fe-S) cluster assembly. May act as a regulator of Fe-S biogenesis. The protein is Iron-sulfur cluster assembly protein CyaY of Histophilus somni (strain 129Pt) (Haemophilus somnus).